A 336-amino-acid chain; its full sequence is Dihydroorotate dehydrogenase (quinone) (336 aa).

FMN contacts are provided by residues 62 to 66 and Thr-86; that span reads AGLDK. A substrate-binding site is contributed by Lys-66. Substrate is bound at residue 111–115; it reads NRMGF. Residues Asn-139 and Asn-172 each contribute to the FMN site. Asn-172 contacts substrate. The active-site Nucleophile is Ser-175. Residue Asn-177 coordinates substrate. FMN-binding residues include Lys-217 and Thr-245. Position 246–247 (246–247) interacts with substrate; sequence NT. FMN-binding positions include Gly-268, Gly-297, and 318–319; that span reads YS.

It belongs to the dihydroorotate dehydrogenase family. Type 2 subfamily. As to quaternary structure, monomer. FMN is required as a cofactor.

The protein localises to the cell membrane. It catalyses the reaction (S)-dihydroorotate + a quinone = orotate + a quinol. Its pathway is pyrimidine metabolism; UMP biosynthesis via de novo pathway; orotate from (S)-dihydroorotate (quinone route): step 1/1. Functionally, catalyzes the conversion of dihydroorotate to orotate with quinone as electron acceptor. The chain is Dihydroorotate dehydrogenase (quinone) from Aeromonas hydrophila subsp. hydrophila (strain ATCC 7966 / DSM 30187 / BCRC 13018 / CCUG 14551 / JCM 1027 / KCTC 2358 / NCIMB 9240 / NCTC 8049).